We begin with the raw amino-acid sequence, 211 residues long: Thiamine-phosphate synthase (211 aa).

4-amino-2-methyl-5-(diphosphooxymethyl)pyrimidine-binding positions include 36–40 (QLREK) and asparagine 68. Mg(2+) contacts are provided by aspartate 69 and aspartate 88. Serine 107 serves as a coordination point for 4-amino-2-methyl-5-(diphosphooxymethyl)pyrimidine. 133–135 (TGS) contributes to the 2-[(2R,5Z)-2-carboxy-4-methylthiazol-5(2H)-ylidene]ethyl phosphate binding site. Lysine 136 contacts 4-amino-2-methyl-5-(diphosphooxymethyl)pyrimidine. Residues glycine 167 and 187–188 (IT) each bind 2-[(2R,5Z)-2-carboxy-4-methylthiazol-5(2H)-ylidene]ethyl phosphate.

The protein belongs to the thiamine-phosphate synthase family. Mg(2+) is required as a cofactor.

The catalysed reaction is 2-[(2R,5Z)-2-carboxy-4-methylthiazol-5(2H)-ylidene]ethyl phosphate + 4-amino-2-methyl-5-(diphosphooxymethyl)pyrimidine + 2 H(+) = thiamine phosphate + CO2 + diphosphate. It catalyses the reaction 2-(2-carboxy-4-methylthiazol-5-yl)ethyl phosphate + 4-amino-2-methyl-5-(diphosphooxymethyl)pyrimidine + 2 H(+) = thiamine phosphate + CO2 + diphosphate. The enzyme catalyses 4-methyl-5-(2-phosphooxyethyl)-thiazole + 4-amino-2-methyl-5-(diphosphooxymethyl)pyrimidine + H(+) = thiamine phosphate + diphosphate. It participates in cofactor biosynthesis; thiamine diphosphate biosynthesis; thiamine phosphate from 4-amino-2-methyl-5-diphosphomethylpyrimidine and 4-methyl-5-(2-phosphoethyl)-thiazole: step 1/1. Its function is as follows. Condenses 4-methyl-5-(beta-hydroxyethyl)thiazole monophosphate (THZ-P) and 2-methyl-4-amino-5-hydroxymethyl pyrimidine pyrophosphate (HMP-PP) to form thiamine monophosphate (TMP). This chain is Thiamine-phosphate synthase, found in Haloarcula marismortui (strain ATCC 43049 / DSM 3752 / JCM 8966 / VKM B-1809) (Halobacterium marismortui).